A 223-amino-acid polypeptide reads, in one-letter code: Pyridoxine/pyridoxamine 5'-phosphate oxidase (223 aa).

Substrate is bound by residues 9 to 12 (RVGY) and lysine 76. Residues 71-76 (RTVLCK), 86-87 (FT), lysine 93, and glutamine 115 each bind FMN. Residues tyrosine 133, arginine 137, and serine 141 each coordinate substrate. Residues 150 to 151 (QS) and tryptophan 196 each bind FMN. Substrate is bound at residue 202–204 (RMH). Arginine 206 contributes to the FMN binding site.

It belongs to the pyridoxamine 5'-phosphate oxidase family. As to quaternary structure, homodimer. FMN serves as cofactor.

The catalysed reaction is pyridoxamine 5'-phosphate + O2 + H2O = pyridoxal 5'-phosphate + H2O2 + NH4(+). The enzyme catalyses pyridoxine 5'-phosphate + O2 = pyridoxal 5'-phosphate + H2O2. It functions in the pathway cofactor metabolism; pyridoxal 5'-phosphate salvage; pyridoxal 5'-phosphate from pyridoxamine 5'-phosphate: step 1/1. It participates in cofactor metabolism; pyridoxal 5'-phosphate salvage; pyridoxal 5'-phosphate from pyridoxine 5'-phosphate: step 1/1. Catalyzes the oxidation of either pyridoxine 5'-phosphate (PNP) or pyridoxamine 5'-phosphate (PMP) into pyridoxal 5'-phosphate (PLP). The polypeptide is Pyridoxine/pyridoxamine 5'-phosphate oxidase (Rhodococcus jostii (strain RHA1)).